A 187-amino-acid chain; its full sequence is GTP cyclohydrolase 1 (187 aa).

Cysteine 76, histidine 79, and cysteine 148 together coordinate Zn(2+).

The protein belongs to the GTP cyclohydrolase I family. Toroid-shaped homodecamer, composed of two pentamers of five dimers.

It catalyses the reaction GTP + H2O = 7,8-dihydroneopterin 3'-triphosphate + formate + H(+). The protein operates within cofactor biosynthesis; 7,8-dihydroneopterin triphosphate biosynthesis; 7,8-dihydroneopterin triphosphate from GTP: step 1/1. The chain is GTP cyclohydrolase 1 from Streptococcus agalactiae serotype III (strain NEM316).